The chain runs to 64 residues: UPF0434 protein BAB2_0345 (64 aa).

Belongs to the UPF0434 family.

This is UPF0434 protein BAB2_0345 from Brucella abortus (strain 2308).